The primary structure comprises 533 residues: Retinoid isomerohydrolase (533 aa).

Ser2 carries the post-translational modification N-acetylserine. Thr101 and Thr105 each carry phosphothreonine. A lipid anchor (S-palmitoyl cysteine; in membrane form) is attached at Cys112. At Lys113 the chain carries N6-acetyllysine. At Ser117 the chain carries Phosphoserine. Residue His180 participates in Fe cation binding. The S-palmitoyl cysteine; in membrane form moiety is linked to residue Cys231. Positions 241 and 313 each coordinate Fe cation. S-palmitoyl cysteine; in membrane form attachment occurs at residues Cys329 and Cys330. His527 is a Fe cation binding site.

This sequence belongs to the carotenoid oxygenase family. As to quaternary structure, interacts with MYO7A; this mediates light-dependent intracellular transport of RPE65. It depends on Fe(2+) as a cofactor. Post-translationally, palmitoylation by LRAT regulates ligand binding specificity; the palmitoylated form (membrane form) specifically binds all-trans-retinyl-palmitate, while the soluble unpalmitoylated form binds all-trans-retinol (vitamin A). As to expression, retinal pigment epithelium specific.

It localises to the cytoplasm. It is found in the cell membrane. Its subcellular location is the microsome membrane. The enzyme catalyses an all-trans-retinyl ester + H2O = 11-cis-retinol + a fatty acid + H(+). The catalysed reaction is lutein = (3R,3'S)-zeaxanthin. It carries out the reaction all-trans-retinyl hexadecanoate + H2O = 11-cis-retinol + hexadecanoate + H(+). Functionally, critical isomerohydrolase in the retinoid cycle involved in regeneration of 11-cis-retinal, the chromophore of rod and cone opsins. Catalyzes the cleavage and isomerization of all-trans-retinyl fatty acid esters to 11-cis-retinol which is further oxidized by 11-cis retinol dehydrogenase to 11-cis-retinal for use as visual chromophore. Essential for the production of 11-cis retinal for both rod and cone photoreceptors. Also capable of catalyzing the isomerization of lutein to meso-zeaxanthin an eye-specific carotenoid. The soluble form binds vitamin A (all-trans-retinol), making it available for LRAT processing to all-trans-retinyl ester. The membrane form, palmitoylated by LRAT, binds all-trans-retinyl esters, making them available for IMH (isomerohydrolase) processing to all-cis-retinol. The soluble form is regenerated by transferring its palmitoyl groups onto 11-cis-retinol, a reaction catalyzed by LRAT. The protein is Retinoid isomerohydrolase (Rpe65) of Mus musculus (Mouse).